A 74-amino-acid polypeptide reads, in one-letter code: uncharacterized protein (74 aa).

This is an uncharacterized protein from Sinorhizobium fredii (strain NBRC 101917 / NGR234).